A 155-amino-acid polypeptide reads, in one-letter code: Small ribosomal subunit protein uS13 (155 aa).

Positions 135-145 (QHTKTTGRRGR) are enriched in basic residues. The interval 135-155 (QHTKTTGRRGRTVGVSRTKGA) is disordered. A compositionally biased stretch (low complexity) spans 146–155 (TVGVSRTKGA).

Belongs to the universal ribosomal protein uS13 family. As to quaternary structure, component of the small ribosomal subunit.

It is found in the cytoplasm. Its function is as follows. Component of the small ribosomal subunit. The ribosome is a large ribonucleoprotein complex responsible for the synthesis of proteins in the cell. The protein is Small ribosomal subunit protein uS13 (RPS18) of Entamoeba histolytica (strain ATCC 30459 / HM-1:IMSS / ABRM).